Here is a 155-residue protein sequence, read N- to C-terminus: Ribosomal RNA large subunit methyltransferase H (155 aa).

Residues Leu72, Gly103, and 122–127 contribute to the S-adenosyl-L-methionine site; that span reads LSPLTL.

Belongs to the RNA methyltransferase RlmH family. In terms of assembly, homodimer.

The protein resides in the cytoplasm. It catalyses the reaction pseudouridine(1915) in 23S rRNA + S-adenosyl-L-methionine = N(3)-methylpseudouridine(1915) in 23S rRNA + S-adenosyl-L-homocysteine + H(+). In terms of biological role, specifically methylates the pseudouridine at position 1915 (m3Psi1915) in 23S rRNA. This is Ribosomal RNA large subunit methyltransferase H from Histophilus somni (strain 129Pt) (Haemophilus somnus).